Reading from the N-terminus, the 126-residue chain is SOSS complex subunit C homolog (126 aa).

The disordered stretch occupies residues 106 to 126; it reads LEPLPSPATTPTAPPSHSISK. The span at 107 to 119 shows a compositional bias: pro residues; the sequence is EPLPSPATTPTAP.

Belongs to the SOSS-C family.

In Drosophila sechellia (Fruit fly), this protein is SOSS complex subunit C homolog.